Reading from the N-terminus, the 216-residue chain is Acyl-homoserine-lactone synthase (216 aa).

Belongs to the autoinducer synthase family.

It catalyses the reaction a fatty acyl-[ACP] + S-adenosyl-L-methionine = an N-acyl-L-homoserine lactone + S-methyl-5'-thioadenosine + holo-[ACP] + H(+). In terms of biological role, required for the synthesis of an acyl-HSL autoinducer that binds to YukR and which is involved in the regulation of motility and morphology. In Yersinia ruckeri, this protein is Acyl-homoserine-lactone synthase (yukI).